The following is a 517-amino-acid chain: Crotonobetaine/carnitine--CoA ligase (517 aa).

It belongs to the ATP-dependent AMP-binding enzyme family.

The catalysed reaction is 4-(trimethylamino)butanoate + ATP + CoA = 4-(trimethylamino)butanoyl-CoA + AMP + diphosphate. The enzyme catalyses crotonobetaine + ATP + CoA = crotonobetainyl-CoA + AMP + diphosphate. It carries out the reaction (R)-carnitine + ATP + CoA = (R)-carnitinyl-CoA + AMP + diphosphate. It participates in amine and polyamine metabolism; carnitine metabolism. Its function is as follows. Catalyzes the transfer of CoA to carnitine, generating the initial carnitinyl-CoA needed for the CaiB reaction cycle. Also has activity toward crotonobetaine and gamma-butyrobetaine. This is Crotonobetaine/carnitine--CoA ligase from Escherichia coli O1:K1 / APEC.